The sequence spans 591 residues: Parathyroid hormone/parathyroid hormone-related peptide receptor (591 aa).

A signal peptide spans 1–26 (MGAARIAPSLALLLCCPVLSSAYALV). The Extracellular segment spans residues 27 to 188 (DADDVFTKEE…REREVFDRLG (162 aa)). 3 cysteine pairs are disulfide-bonded: Cys-48–Cys-117, Cys-108–Cys-148, and Cys-131–Cys-170. A disordered region spans residues 67-104 (KGWTPASTSGKPRKEKASGKFYPESKENKDVPTGSRRR). The span at 81-96 (EKASGKFYPESKENKD) shows a compositional bias: basic and acidic residues. Residues Asn-151, Asn-161, Asn-166, and Asn-176 are each glycosylated (N-linked (GlcNAc...) asparagine). The chain crosses the membrane as a helical span at residues 189 to 212 (MIYTVGYSMSLASLTVAVLILAYF). At 213–219 (RRLHCTR) the chain is on the cytoplasmic side. Residues 220 to 239 (NYIHMHMFLSFMLRAASIFV) form a helical membrane-spanning segment. Residues 240–282 (KDAVLYSGFTLDEAERLTEEELHIIAQVPPPPAAAAVGYAGCR) are Extracellular-facing. A helical membrane pass occupies residues 283–306 (VAVTFFLYFLATNYYWILVEGLYL). The Cytoplasmic portion of the chain corresponds to 307–320 (HSLIFMAFFSEKKY). The helical transmembrane segment at 321–342 (LWGFTIFGWGLPAVFVAVWVGV) threads the bilayer. Residues 343-361 (RATLANTGCWDLSSGHKKW) are Extracellular-facing. The chain crosses the membrane as a helical span at residues 362–382 (IIQVPILASVVLNFILFINII). Residues 383–409 (RVLATKLRETNAGRCDTRQQYRKLLRS) are Cytoplasmic-facing. A helical transmembrane segment spans residues 410 to 428 (TLVLVPLFGVHYTVFMALP). Over 429–440 (YTEVSGTLWQIQ) the chain is Extracellular. A helical membrane pass occupies residues 441–463 (MHYEMLFNSFQGFFVAIIYCFCN). Topologically, residues 464-591 (GEVQAEIRKS…LLQEEWETVM (128 aa)) are cytoplasmic. Positions 474–477 (WSRW) match the Important for interaction with G proteins motif. The disordered stretch occupies residues 516 to 544 (LPLSPRLPPATTNGHSQLPGHAKPGAPAT).

It belongs to the G-protein coupled receptor 2 family. As to quaternary structure, homodimer in the absence of bound ligand. Peptide hormone binding leads to dissociation of the homodimer. N-glycosylated.

It is found in the cell membrane. G-protein-coupled receptor for parathyroid hormone (PTH) and for parathyroid hormone-related peptide (PTHLH). Ligand binding causes a conformation change that triggers signaling via guanine nucleotide-binding proteins (G proteins) and modulates the activity of downstream effectors, such as adenylate cyclase (cAMP). PTH1R is coupled to G(s) G alpha proteins and mediates activation of adenylate cyclase activity. PTHLH dissociates from PTH1R more rapidly than PTH; as consequence, the cAMP response induced by PTHLH decays faster than the response induced by PTH. This is Parathyroid hormone/parathyroid hormone-related peptide receptor (Pth1r) from Rattus norvegicus (Rat).